A 526-amino-acid polypeptide reads, in one-letter code: Exodeoxyribonuclease 7 large subunit (526 aa).

The interval 499–526 is disordered; it reads AGEDGTPSQAPKKRPARAGEPTKQGSLF.

Belongs to the XseA family. In terms of assembly, heterooligomer composed of large and small subunits.

Its subcellular location is the cytoplasm. The enzyme catalyses Exonucleolytic cleavage in either 5'- to 3'- or 3'- to 5'-direction to yield nucleoside 5'-phosphates.. Functionally, bidirectionally degrades single-stranded DNA into large acid-insoluble oligonucleotides, which are then degraded further into small acid-soluble oligonucleotides. This chain is Exodeoxyribonuclease 7 large subunit, found in Sinorhizobium medicae (strain WSM419) (Ensifer medicae).